The chain runs to 85 residues: Translation initiation factor IF-1 2 (85 aa).

An S1-like domain is found at 1–72 (MAKEELIEMQ…TKGRITFRHL (72 aa)).

This sequence belongs to the IF-1 family. In terms of assembly, component of the 30S ribosomal translation pre-initiation complex which assembles on the 30S ribosome in the order IF-2 and IF-3, IF-1 and N-formylmethionyl-tRNA(fMet); mRNA recruitment can occur at any time during PIC assembly.

Its subcellular location is the cytoplasm. Its function is as follows. One of the essential components for the initiation of protein synthesis. Stabilizes the binding of IF-2 and IF-3 on the 30S subunit to which N-formylmethionyl-tRNA(fMet) subsequently binds. Helps modulate mRNA selection, yielding the 30S pre-initiation complex (PIC). Upon addition of the 50S ribosomal subunit IF-1, IF-2 and IF-3 are released leaving the mature 70S translation initiation complex. This Paracidovorax citrulli (strain AAC00-1) (Acidovorax citrulli) protein is Translation initiation factor IF-1 2.